Reading from the N-terminus, the 140-residue chain is Protein ripply1 (140 aa).

The WRPW motif; required for gro2-binding signature appears at 28 to 31 (WRPW). Positions 71–106 (HPVRLYWPRSKSFDYLFSDGEALLRNFPVQATINFY) are ripply homology domain. The tract at residues 107 to 126 (DESDSEDEEESCDEDDESDV) is disordered.

This sequence belongs to the ripply family. In terms of assembly, interacts with gro2 via the WRPW motif. Expressed in the embryonic anterior presomitic mesoderm and in newly formed somites.

The protein localises to the nucleus. In terms of biological role, plays a role in somitogenesis. Essential for transcriptional repression of the segmental patterning genes, thus terminating the segmentation program in the presomitic mesoderm, and also required for the maintenance of rostrocaudal polarity in somites. The chain is Protein ripply1 from Danio rerio (Zebrafish).